Here is a 137-residue protein sequence, read N- to C-terminus: Ribonuclease VapC18 (137 aa).

A PINc domain is found at 4–126 (CVDTSAWHHA…YDRVAAITGQ (123 aa)). Positions 6 and 96 each coordinate Mg(2+).

It belongs to the PINc/VapC protein family. It depends on Mg(2+) as a cofactor.

Its function is as follows. Toxic component of a type II toxin-antitoxin (TA) system. An RNase. The cognate antitoxin is VapB18. This chain is Ribonuclease VapC18, found in Mycobacterium tuberculosis (strain ATCC 25618 / H37Rv).